The chain runs to 177 residues: Large ribosomal subunit protein uL6 (177 aa).

The protein belongs to the universal ribosomal protein uL6 family. As to quaternary structure, part of the 50S ribosomal subunit.

In terms of biological role, this protein binds to the 23S rRNA, and is important in its secondary structure. It is located near the subunit interface in the base of the L7/L12 stalk, and near the tRNA binding site of the peptidyltransferase center. The chain is Large ribosomal subunit protein uL6 from Brucella abortus (strain S19).